A 1142-amino-acid polypeptide reads, in one-letter code: Serine/threonine-protein kinase GIN4 (1142 aa).

A Protein kinase domain is found at 19 to 289 (WKLGETLGLG…TRDILKHPLL (271 aa)). ATP-binding positions include 25 to 33 (LGLGSTGKV) and K48. Residue D156 is the Proton acceptor of the active site. Disordered stretches follow at residues 378–412 (KKRQSISSVSVSPSKKVSTTPQRRRNRESLISVTS) and 425–469 (ASSA…RNKR). The segment covering 382 to 395 (SISSVSVSPSKKVS) has biased composition (low complexity). Residue S406 is modified to Phosphoserine. Residues 425-440 (ASSASSSNLTTPGSSK) show a composition bias toward low complexity. Residues 441-452 (RLSKNFSSKKKL) show a composition bias toward basic residues. Positions 454 to 465 (TIVNQSSPTPAS) are enriched in polar residues. Phosphoserine occurs at positions 465, 471, 617, 689, 719, 805, 807, and 883. A disordered region spans residues 676-698 (DPGIMFSSPTEEVSPVEPKRTEN). Position 884 is a phosphothreonine (T884). A disordered region spans residues 903 to 1031 (NEAKQTDNLH…NTAIGNGSFF (129 aa)). Basic and acidic residues-rich tracts occupy residues 923-937 (NELRKQNSQEGDQAH), 962-984 (KEEKKPEQHKQEEDQEKREKVVD), and 996-1021 (KIREKNAGSQAKDHSKDHLKEHKQDK). S930 carries the phosphoserine modification.

The protein belongs to the protein kinase superfamily. CAMK Ser/Thr protein kinase family. NIM1 subfamily. Component of the GIN4 complex composed of at least BNI5, CDC3, CDC10, CDC11, CDC12, GIN4, NAP1 and SHS1 which forms a ring at the bud neck.

The protein resides in the cytoplasm. Its subcellular location is the bud neck. It catalyses the reaction L-seryl-[protein] + ATP = O-phospho-L-seryl-[protein] + ADP + H(+). The enzyme catalyses L-threonyl-[protein] + ATP = O-phospho-L-threonyl-[protein] + ADP + H(+). Serine/threonine-protein kinase which regulates the localization and the function of the septins during mitosis. Phosphorylates SHS1. This chain is Serine/threonine-protein kinase GIN4 (GIN4), found in Saccharomyces cerevisiae (strain ATCC 204508 / S288c) (Baker's yeast).